The sequence spans 627 residues: Carnitine O-acetyltransferase (627 aa).

A propeptide spanning residues 1-30 (MDRKQKQAEKARPYGLLKPAALGKIPGRFQ) is cleaved from the precursor. Lysine 94 is subject to N6-succinyllysine. Residue lysine 262 is modified to N6-acetyllysine; alternate. Lysine 262 is modified (N6-succinyllysine; alternate). Lysine 269 is subject to N6-acetyllysine. Catalysis depends on histidine 344, which acts as the Proton acceptor. Residues lysine 420 and 424 to 431 (KSEKISPD) each bind CoA. (R)-carnitine is bound by residues tyrosine 453 and serine 455. Position 457 (serine 457) interacts with CoA. Threonine 466 contacts (R)-carnitine. Glutamine 556 contacts CoA. The short motif at 625–627 (SKL) is the Microbody targeting signal element.

Belongs to the carnitine/choline acetyltransferase family. In terms of assembly, monomer.

The protein resides in the endoplasmic reticulum. It is found in the peroxisome. It localises to the mitochondrion inner membrane. It carries out the reaction (R)-carnitine + acetyl-CoA = O-acetyl-(R)-carnitine + CoA. The catalysed reaction is propanoyl-CoA + (R)-carnitine = O-propanoyl-(R)-carnitine + CoA. The enzyme catalyses butanoyl-CoA + (R)-carnitine = O-butanoyl-(R)-carnitine + CoA. It catalyses the reaction hexanoyl-CoA + (R)-carnitine = O-hexanoyl-(R)-carnitine + CoA. It carries out the reaction octanoyl-CoA + (R)-carnitine = O-octanoyl-(R)-carnitine + CoA. The catalysed reaction is decanoyl-CoA + (R)-carnitine = O-decanoyl-(R)-carnitine + CoA. The enzyme catalyses 3-methylbutanoyl-CoA + (R)-carnitine = O-3-methylbutanoyl-(R)-carnitine + CoA. It catalyses the reaction 2-methylpropanoyl-CoA + (R)-carnitine = O-isobutanoyl-(R)-carnitine + CoA. It carries out the reaction 2-methylbutanoyl-CoA + (R)-carnitine = O-2-methylbutanoyl-(R)-carnitine + CoA. The catalysed reaction is acetoacetyl-CoA + (R)-carnitine = O-3-oxobutanoyl-(R)-carnitine + CoA. The enzyme catalyses 3-hydroxybutanoyl-CoA + (R)-carnitine = O-3-hydroxybutanoyl-(R)-carnitine + CoA. It catalyses the reaction 4,8-dimethylnonanoyl-CoA + (R)-carnitine = O-4,8-dimethylnonanoyl-(R)-carnitine + CoA. It carries out the reaction 2,6-dimethylheptanoyl-CoA + (R)-carnitine = O-2,6-dimethylheptanoyl-(R)-carnitine + CoA. In terms of biological role, catalyzes the reversible transfer of acyl groups from carnitine to coenzyme A (CoA) and regulates the acyl-CoA/CoA ratio. Also plays a crucial role in the transport of fatty acids for beta-oxidation. Responsible for the synthesis of short- and branched-chain acylcarnitines. Active towards some branched-chain amino acid oxidation pathway (BCAAO) intermediates. Trans-2-enoyl-CoAs and 2-methylacyl-CoAs are poor substrates. The polypeptide is Carnitine O-acetyltransferase (CRAT) (Columba livia (Rock dove)).